Here is a 602-residue protein sequence, read N- to C-terminus: Elongation factor 4 (602 aa).

One can recognise a tr-type G domain in the interval Glu-7 to Lys-188. GTP contacts are provided by residues Asp-19–Thr-24 and Asn-135–Asp-138.

The protein belongs to the TRAFAC class translation factor GTPase superfamily. Classic translation factor GTPase family. LepA subfamily.

The protein localises to the cell inner membrane. The enzyme catalyses GTP + H2O = GDP + phosphate + H(+). In terms of biological role, required for accurate and efficient protein synthesis under certain stress conditions. May act as a fidelity factor of the translation reaction, by catalyzing a one-codon backward translocation of tRNAs on improperly translocated ribosomes. Back-translocation proceeds from a post-translocation (POST) complex to a pre-translocation (PRE) complex, thus giving elongation factor G a second chance to translocate the tRNAs correctly. Binds to ribosomes in a GTP-dependent manner. The sequence is that of Elongation factor 4 from Chlamydia trachomatis serovar D (strain ATCC VR-885 / DSM 19411 / UW-3/Cx).